The sequence spans 161 residues: uncharacterized protein (161 aa).

It to R.leguminosarum PsiB.

This is an uncharacterized protein from Sinorhizobium fredii (strain NBRC 101917 / NGR234).